The primary structure comprises 284 residues: Pseudomurein endoisopeptidase PeiW (284 aa).

Pseudomurein-binding repeat regions lie at residues 4 to 31 (GLNE…YVTT), 34 to 65 (GYKV…YISI), 70 to 100 (NGKI…NIIY), and 106 to 137 (SDHV…YISI). Active-site residues include cysteine 198, histidine 233, and aspartate 250.

This sequence belongs to the Psimunavirus Pseudomurein endoisopeptidase family. Monomer. The cofactor is Ca(2+). It depends on Mg(2+) as a cofactor.

Its function is as follows. Cysteine protease that cleaves the cell wall of its host methanogen under hydrogen limitation of the latter (autolysis). Cleaves the epsilon-Ala-Lys isopeptide bond in the oligopeptides of pseudomurein. The protein is Pseudomurein endoisopeptidase PeiW (peiW) of Methanothermobacter phage psiM100.